The sequence spans 227 residues: Cytochrome c oxidase subunit 2 (227 aa).

Over 1–14 the chain is Mitochondrial intermembrane; that stretch reads MAYPLQMGLQDATS. A helical transmembrane segment spans residues 15 to 45; it reads PIMEELLHFHDHTLMIVFLISSLVLYIISLM. Residues 46-59 lie on the Mitochondrial matrix side of the membrane; that stretch reads LTTKLTHTSTMDAQ. Residues 60–87 traverse the membrane as a helical segment; the sequence is EVETVWTILPAIILILIALPSLRILYMM. Topologically, residues 88-227 are mitochondrial intermembrane; that stretch reads DEINNPSLTV…HFEKWSTSML (140 aa). Residues H161, C196, E198, C200, H204, and M207 each coordinate Cu cation. Mg(2+) is bound at residue E198.

The protein belongs to the cytochrome c oxidase subunit 2 family. In terms of assembly, component of the cytochrome c oxidase (complex IV, CIV), a multisubunit enzyme composed of 14 subunits. The complex is composed of a catalytic core of 3 subunits MT-CO1, MT-CO2 and MT-CO3, encoded in the mitochondrial DNA, and 11 supernumerary subunits COX4I, COX5A, COX5B, COX6A, COX6B, COX6C, COX7A, COX7B, COX7C, COX8 and NDUFA4, which are encoded in the nuclear genome. The complex exists as a monomer or a dimer and forms supercomplexes (SCs) in the inner mitochondrial membrane with NADH-ubiquinone oxidoreductase (complex I, CI) and ubiquinol-cytochrome c oxidoreductase (cytochrome b-c1 complex, complex III, CIII), resulting in different assemblies (supercomplex SCI(1)III(2)IV(1) and megacomplex MCI(2)III(2)IV(2)). Found in a complex with TMEM177, COA6, COX18, COX20, SCO1 and SCO2. Interacts with TMEM177 in a COX20-dependent manner. Interacts with COX20. Interacts with COX16. Requires Cu cation as cofactor.

It is found in the mitochondrion inner membrane. The enzyme catalyses 4 Fe(II)-[cytochrome c] + O2 + 8 H(+)(in) = 4 Fe(III)-[cytochrome c] + 2 H2O + 4 H(+)(out). In terms of biological role, component of the cytochrome c oxidase, the last enzyme in the mitochondrial electron transport chain which drives oxidative phosphorylation. The respiratory chain contains 3 multisubunit complexes succinate dehydrogenase (complex II, CII), ubiquinol-cytochrome c oxidoreductase (cytochrome b-c1 complex, complex III, CIII) and cytochrome c oxidase (complex IV, CIV), that cooperate to transfer electrons derived from NADH and succinate to molecular oxygen, creating an electrochemical gradient over the inner membrane that drives transmembrane transport and the ATP synthase. Cytochrome c oxidase is the component of the respiratory chain that catalyzes the reduction of oxygen to water. Electrons originating from reduced cytochrome c in the intermembrane space (IMS) are transferred via the dinuclear copper A center (CU(A)) of subunit 2 and heme A of subunit 1 to the active site in subunit 1, a binuclear center (BNC) formed by heme A3 and copper B (CU(B)). The BNC reduces molecular oxygen to 2 water molecules using 4 electrons from cytochrome c in the IMS and 4 protons from the mitochondrial matrix. In Phoca vitulina (Harbor seal), this protein is Cytochrome c oxidase subunit 2 (MT-CO2).